The chain runs to 247 residues: Geranylgeranylglyceryl phosphate synthase (247 aa).

Positions 23 and 52 each coordinate Mg(2+). Sn-glycerol 1-phosphate contacts are provided by residues 171–177 (YLEAGSG), 203–204 (GG), and 225–226 (GT).

The protein belongs to the GGGP/HepGP synthase family. Group II subfamily. Mg(2+) is required as a cofactor.

It is found in the cytoplasm. The catalysed reaction is sn-glycerol 1-phosphate + (2E,6E,10E)-geranylgeranyl diphosphate = sn-3-O-(geranylgeranyl)glycerol 1-phosphate + diphosphate. It functions in the pathway membrane lipid metabolism; glycerophospholipid metabolism. Its function is as follows. Prenyltransferase that catalyzes the transfer of the geranylgeranyl moiety of geranylgeranyl diphosphate (GGPP) to the C3 hydroxyl of sn-glycerol-1-phosphate (G1P). This reaction is the first ether-bond-formation step in the biosynthesis of archaeal membrane lipids. The chain is Geranylgeranylglyceryl phosphate synthase from Methanosarcina acetivorans (strain ATCC 35395 / DSM 2834 / JCM 12185 / C2A).